Consider the following 403-residue polypeptide: Argininosuccinate synthase (403 aa).

ATP-binding positions include 13-21 and Ala-40; that span reads AYSGGLDTS. 2 residues coordinate L-citrulline: Tyr-92 and Ser-97. Gly-122 is a binding site for ATP. Positions 124, 128, and 129 each coordinate L-aspartate. Residue Asn-128 coordinates L-citrulline. Arg-132, Ser-181, Ser-190, Glu-266, and Tyr-278 together coordinate L-citrulline.

It belongs to the argininosuccinate synthase family. Type 1 subfamily. In terms of assembly, homotetramer.

It localises to the cytoplasm. The enzyme catalyses L-citrulline + L-aspartate + ATP = 2-(N(omega)-L-arginino)succinate + AMP + diphosphate + H(+). Its pathway is amino-acid biosynthesis; L-arginine biosynthesis; L-arginine from L-ornithine and carbamoyl phosphate: step 2/3. The polypeptide is Argininosuccinate synthase (Aliivibrio salmonicida (strain LFI1238) (Vibrio salmonicida (strain LFI1238))).